The sequence spans 327 residues: Biotin synthase (327 aa).

The region spanning 49–275 (RFGREVSLCS…VNPHAEVRMA (227 aa)) is the Radical SAM core domain. [4Fe-4S] cluster is bound by residues cysteine 67, cysteine 71, and cysteine 74. [2Fe-2S] cluster-binding residues include serine 112, cysteine 143, cysteine 203, and arginine 273.

It belongs to the radical SAM superfamily. Biotin synthase family. As to quaternary structure, homodimer. The cofactor is [4Fe-4S] cluster. It depends on [2Fe-2S] cluster as a cofactor.

The catalysed reaction is (4R,5S)-dethiobiotin + (sulfur carrier)-SH + 2 reduced [2Fe-2S]-[ferredoxin] + 2 S-adenosyl-L-methionine = (sulfur carrier)-H + biotin + 2 5'-deoxyadenosine + 2 L-methionine + 2 oxidized [2Fe-2S]-[ferredoxin]. It functions in the pathway cofactor biosynthesis; biotin biosynthesis; biotin from 7,8-diaminononanoate: step 2/2. Functionally, catalyzes the conversion of dethiobiotin (DTB) to biotin by the insertion of a sulfur atom into dethiobiotin via a radical-based mechanism. In Maridesulfovibrio salexigens (strain ATCC 14822 / DSM 2638 / NCIMB 8403 / VKM B-1763) (Desulfovibrio salexigens), this protein is Biotin synthase.